Consider the following 134-residue polypeptide: ATP synthase epsilon chain, chloroplastic (134 aa).

Belongs to the ATPase epsilon chain family. As to quaternary structure, F-type ATPases have 2 components, CF(1) - the catalytic core - and CF(0) - the membrane proton channel. CF(1) has five subunits: alpha(3), beta(3), gamma(1), delta(1), epsilon(1). CF(0) has three main subunits: a, b and c.

Its subcellular location is the plastid. It localises to the chloroplast thylakoid membrane. In terms of biological role, produces ATP from ADP in the presence of a proton gradient across the membrane. This Chlorella vulgaris (Green alga) protein is ATP synthase epsilon chain, chloroplastic.